The sequence spans 120 residues: NAD(P)H-quinone oxidoreductase subunit 3, chloroplastic (120 aa).

The next 3 membrane-spanning stretches (helical) occupy residues 9-29, 64-84, and 88-108; these read IFWA…LISG, MFAL…PWAM, and VLGV…ILGL.

Belongs to the complex I subunit 3 family. As to quaternary structure, NDH is composed of at least 16 different subunits, 5 of which are encoded in the nucleus.

The protein resides in the plastid. It is found in the chloroplast thylakoid membrane. The catalysed reaction is a plastoquinone + NADH + (n+1) H(+)(in) = a plastoquinol + NAD(+) + n H(+)(out). It catalyses the reaction a plastoquinone + NADPH + (n+1) H(+)(in) = a plastoquinol + NADP(+) + n H(+)(out). Functionally, NDH shuttles electrons from NAD(P)H:plastoquinone, via FMN and iron-sulfur (Fe-S) centers, to quinones in the photosynthetic chain and possibly in a chloroplast respiratory chain. The immediate electron acceptor for the enzyme in this species is believed to be plastoquinone. Couples the redox reaction to proton translocation, and thus conserves the redox energy in a proton gradient. The sequence is that of NAD(P)H-quinone oxidoreductase subunit 3, chloroplastic from Arabidopsis thaliana (Mouse-ear cress).